Reading from the N-terminus, the 261-residue chain is Small ribosomal subunit protein uS2 (261 aa).

Serine 2 bears the N-acetylserine mark. The interval 215 to 261 is disordered; sequence AEEAKTTEDVEEAAPVDADEWTGETEEVDWAESGATPAVEDAAASNW. Residues 223-244 show a composition bias toward acidic residues; that stretch reads DVEEAAPVDADEWTGETEEVDW.

It belongs to the universal ribosomal protein uS2 family. Component of the small ribosomal subunit. Mature ribosomes consist of a small (40S) and a large (60S) subunit. The 40S subunit contains about 33 different proteins and 1 molecule of RNA (18S). The 60S subunit contains about 49 different proteins and 3 molecules of RNA (25S, 5.8S and 5S). Interacts with RPS21.

Its subcellular location is the cytoplasm. Its function is as follows. Required for the assembly and/or stability of the 40S ribosomal subunit. Required for the processing of the 20S rRNA-precursor to mature 18S rRNA in a late step of the maturation of 40S ribosomal subunits. This is Small ribosomal subunit protein uS2 from Scheffersomyces stipitis (strain ATCC 58785 / CBS 6054 / NBRC 10063 / NRRL Y-11545) (Yeast).